A 352-amino-acid chain; its full sequence is PhoH-like protein (352 aa).

The disordered stretch occupies residues 1–21 (MTSRETRAADAAGARQADAQV). A compositionally biased stretch (low complexity) spans 9 to 20 (ADAAGARQADAQ). 150–157 (GPAGTGKT) is a binding site for ATP.

This sequence belongs to the PhoH family.

The protein resides in the cytoplasm. The polypeptide is PhoH-like protein (Mycobacterium bovis (strain ATCC BAA-935 / AF2122/97)).